We begin with the raw amino-acid sequence, 389 residues long: MPEGPELHLASHFVNETCKGLVFGGCVEKSSVSRNPEVPFESSAYHISALARGKELRLTLSPLPGSQPPQKPLSLVFRFGMSGSFQLVPAEALPRHAHLRFYTAPPAPRLALCFVDIRRFGHWDPGGEWQPGRGPCVLLEYERFRENVLRNLSDKAFDRPICEALLDQRFFNGIGNYLRAEILYRLKIPPFEKARTVLEALQQCRPSPELTLSQKIKAKLQNPDLLELCHLVPKEVVQLGGKGYGPERGEEDFAAFRAWLRCYGVPGMSSLRDRHGRTIWFQGDPGPLAPKGGRSQKKKSQETQLGAEDRKEDLPLSSKSVSRMRRARKHPPKRIAQQSEGAGLQQNQETPTAPEKGKRRGQRASTGHRRRPKTIPDTRPREAGESSAS.

The Schiff-base intermediate with DNA role is filled by proline 2. The active-site Proton donor is the glutamate 3. Lysine 54 functions as the Proton donor; for beta-elimination activity in the catalytic mechanism. Asparagine 176 provides a ligand contact to DNA. Residues 278–389 (TIWFQGDPGP…PREAGESSAS (112 aa)) are disordered. A compositionally biased stretch (basic residues) spans 322-333 (SRMRRARKHPPK). Residues 336-351 (AQQSEGAGLQQNQETP) show a composition bias toward polar residues. Over residues 357–373 (GKRRGQRASTGHRRRPK) the composition is skewed to basic residues. The segment covering 374–389 (TIPDTRPREAGESSAS) has biased composition (basic and acidic residues).

Belongs to the FPG family. In terms of tissue distribution, detected in heart, spleen and lung.

The protein localises to the cytoplasm. It localises to the cytoskeleton. Its subcellular location is the microtubule organizing center. The protein resides in the centrosome. It is found in the nucleus. The protein localises to the chromosome. It catalyses the reaction 2'-deoxyribonucleotide-(2'-deoxyribose 5'-phosphate)-2'-deoxyribonucleotide-DNA = a 3'-end 2'-deoxyribonucleotide-(2,3-dehydro-2,3-deoxyribose 5'-phosphate)-DNA + a 5'-end 5'-phospho-2'-deoxyribonucleoside-DNA + H(+). Functionally, involved in base excision repair of DNA damaged by oxidation or by mutagenic agents. Acts as a DNA glycosylase that recognizes and removes damaged bases. Has a preference for oxidized pyrimidines, such as thymine glycol, formamidopyrimidine (Fapy) and 5-hydroxyuracil. Has marginal activity towards 8-oxoguanine. Has AP (apurinic/apyrimidinic) lyase activity and introduces nicks in the DNA strand. Cleaves the DNA backbone by beta-delta elimination to generate a single-strand break at the site of the removed base with both 3'- and 5'-phosphates. Has DNA glycosylase/lyase activity towards mismatched uracil and thymine, in particular in U:C and T:C mismatches. Specifically binds 5-hydroxymethylcytosine (5hmC), suggesting that it acts as a specific reader of 5hmC. This Mus musculus (Mouse) protein is Endonuclease 8-like 1 (Neil1).